Here is a 615-residue protein sequence, read N- to C-terminus: Vitamin B12 transporter BtuB (615 aa).

An N-terminal signal peptide occupies residues 1–20 (MIKKVSLMTALSVTAFSGWA). The TonB box motif lies at 25–32 (DSLVVTAN). A TBDR plug domain is found at 37–151 (PANTVLAPTS…IGGVVNIITT (115 aa)). Residues Ser84, Asn91, and 109–110 (VT) contribute to the cyanocob(III)alamin site. Positions 154–615 (KDGTTLNAGV…EYTLSGSYTF (462 aa)) constitute a TBDR beta-barrel domain. Beta stranded transmembrane passes span 157 to 164 (TTLNAGVG), 168 to 177 (YQNYGGSTQQ), and 183 to 194 (TRVTLAGDYTYT). Residues Asp198, Gln210, Asp212, and Asp214 each coordinate Ca(2+). Beta stranded transmembrane passes span 216–226 (YMNKTIYGALE) and 231–247 (DQWS…NRTA). Residues Tyr248 and Asp249 each coordinate Ca(2+). Ala250 contributes to the cyanocob(III)alamin binding site. Position 262 (Asp262) interacts with Ca(2+). 17 consecutive transmembrane segments (beta stranded) span residues 264–278 (RQLY…LRFN), 280–297 (GIFH…KDYN), 310–326 (TLDE…NSVD), 329–338 (HGNVGAGVDW), 354–370 (TNLR…QKFG), 372–382 (FTLEGAARSDD), 386–401 (FGRH…WEFI), 404–418 (YRFI…KAPN), 435–444 (ESKQWEGAFE), 450–459 (VSWRVSAYRN), 474–491 (YYNV…TASF), 495–510 (PLTH…ARNA), 518–530 (RRAK…QLDT), 536–551 (DWSL…YDTD), 559–573 (KVKM…LAVS), 586–597 (IANLFDKDYETV), and 603–615 (AGRE…SYTF). Thr310 lines the cyanocob(III)alamin pocket. Arg518 contacts cyanocob(III)alamin. A TonB C-terminal box motif is present at residues 598-615 (YGYETAGREYTLSGSYTF).

It belongs to the TonB-dependent receptor family. BtuB (TC 1.B.14.3.1) subfamily.

Its subcellular location is the cell outer membrane. In terms of biological role, involved in the active translocation of vitamin B12 (cyanocobalamin) across the outer membrane to the periplasmic space. It derives its energy for transport by interacting with the trans-periplasmic membrane protein TonB. The sequence is that of Vitamin B12 transporter BtuB from Enterobacter sp. (strain 638).